The following is a 148-amino-acid chain: Large-conductance mechanosensitive channel (148 aa).

Transmembrane regions (helical) follow at residues 9–29 (AFAVKGNVVDMAVGIIIGAAF) and 79–99 (IQTVIDFIIVAFAIFMGVKAI).

This sequence belongs to the MscL family. In terms of assembly, homopentamer.

It is found in the cell inner membrane. Its function is as follows. Channel that opens in response to stretch forces in the membrane lipid bilayer. May participate in the regulation of osmotic pressure changes within the cell. This chain is Large-conductance mechanosensitive channel, found in Pseudomonas savastanoi pv. phaseolicola (strain 1448A / Race 6) (Pseudomonas syringae pv. phaseolicola (strain 1448A / Race 6)).